Here is a 357-residue protein sequence, read N- to C-terminus: 4-hydroxyphenylpyruvate dioxygenase (357 aa).

VOC domains are found at residues 12 to 129 and 158 to 313; these read GFEF…LIDR and IIDH…IFSE. The Fe cation site is built by His161, His240, and Glu322.

It belongs to the 4HPPD family. As to quaternary structure, homotetramer. Fe cation serves as cofactor.

It catalyses the reaction 3-(4-hydroxyphenyl)pyruvate + O2 = homogentisate + CO2. It participates in amino-acid degradation; L-phenylalanine degradation; acetoacetate and fumarate from L-phenylalanine: step 3/6. This chain is 4-hydroxyphenylpyruvate dioxygenase (hpd), found in Pseudomonas sp. (strain P.J. 874).